Here is a 287-residue protein sequence, read N- to C-terminus: 26S proteasome non-ATPase regulatory subunit 8 (287 aa).

Serine 43 bears the Phosphoserine mark. Residues 99-268 (PSFERYMAQL…QQKPEDTTIP (170 aa)) form the PCI domain. Residue lysine 234 forms a Glycyl lysine isopeptide (Lys-Gly) (interchain with G-Cter in SUMO2) linkage.

Belongs to the proteasome subunit S14 family. As to quaternary structure, component of the 19S proteasome regulatory particle complex. The 26S proteasome consists of a 20S core particle (CP) and two 19S regulatory subunits (RP). The regulatory particle is made of a lid composed of 9 subunits including PSMD8, a base containing 6 ATPases and few additional components. Interacts with DDI2. Interacts with TASOR.

Component of the 26S proteasome, a multiprotein complex involved in the ATP-dependent degradation of ubiquitinated proteins. This complex plays a key role in the maintenance of protein homeostasis by removing misfolded or damaged proteins, which could impair cellular functions, and by removing proteins whose functions are no longer required. Therefore, the proteasome participates in numerous cellular processes, including cell cycle progression, apoptosis, or DNA damage repair. This Bos taurus (Bovine) protein is 26S proteasome non-ATPase regulatory subunit 8 (PSMD8).